The chain runs to 311 residues: tRNA-cytidine(32) 2-sulfurtransferase (311 aa).

The PP-loop motif signature appears at serine 47 to serine 52. Positions 122, 125, and 213 each coordinate [4Fe-4S] cluster.

The protein belongs to the TtcA family. As to quaternary structure, homodimer. Mg(2+) serves as cofactor. Requires [4Fe-4S] cluster as cofactor.

The protein localises to the cytoplasm. It catalyses the reaction cytidine(32) in tRNA + S-sulfanyl-L-cysteinyl-[cysteine desulfurase] + AH2 + ATP = 2-thiocytidine(32) in tRNA + L-cysteinyl-[cysteine desulfurase] + A + AMP + diphosphate + H(+). It participates in tRNA modification. Functionally, catalyzes the ATP-dependent 2-thiolation of cytidine in position 32 of tRNA, to form 2-thiocytidine (s(2)C32). The sulfur atoms are provided by the cysteine/cysteine desulfurase (IscS) system. This is tRNA-cytidine(32) 2-sulfurtransferase from Pectobacterium atrosepticum (strain SCRI 1043 / ATCC BAA-672) (Erwinia carotovora subsp. atroseptica).